The following is a 512-amino-acid chain: Cytochrome P450 76C2 (512 aa).

The chain crosses the membrane as a helical span at residues 3–23 (IIFEQALFPLFCFVLSFFIIF). A heme-binding site is contributed by C451.

This sequence belongs to the cytochrome P450 family. Heme serves as cofactor.

It is found in the membrane. This is Cytochrome P450 76C2 (CYP76C2) from Arabidopsis thaliana (Mouse-ear cress).